Consider the following 435-residue polypeptide: Adenylosuccinate synthetase (435 aa).

GTP contacts are provided by residues 22–28 (GDEGKGK) and 50–52 (GHT). Asp-23 functions as the Proton acceptor in the catalytic mechanism. Mg(2+) contacts are provided by Asp-23 and Gly-50. Residues 23–26 (DEGK), 48–51 (NAGH), Thr-140, Arg-154, Gln-235, Thr-250, and Arg-314 contribute to the IMP site. His-51 (proton donor) is an active-site residue. 310-316 (ATTGRKR) provides a ligand contact to substrate. GTP is bound by residues Arg-316, 342-344 (KLD), and 424-426 (SVG).

The protein belongs to the adenylosuccinate synthetase family. As to quaternary structure, homodimer. The cofactor is Mg(2+).

The protein localises to the cytoplasm. It catalyses the reaction IMP + L-aspartate + GTP = N(6)-(1,2-dicarboxyethyl)-AMP + GDP + phosphate + 2 H(+). Its pathway is purine metabolism; AMP biosynthesis via de novo pathway; AMP from IMP: step 1/2. Functionally, plays an important role in the de novo pathway of purine nucleotide biosynthesis. Catalyzes the first committed step in the biosynthesis of AMP from IMP. The chain is Adenylosuccinate synthetase from Chlorobaculum parvum (strain DSM 263 / NCIMB 8327) (Chlorobium vibrioforme subsp. thiosulfatophilum).